Here is a 427-residue protein sequence, read N- to C-terminus: MLDIKWIRENPEALDAALAKRGAEPLAQSLVALDEKRRSAVQKAQDLLSRRNLASKEIGAAMAQKNSELAEKLKAEVSELKTLLPAIEEEDRQLTAELNDALSRIPNIPFDDVPVGKDEHDNIVTRTVGEKPRWNHAPKEHFEIGEALGYMDFERAAKLSGSRFTVLTGPLARLERALGQFMIDLHTSEHGYIEVSSPLMVRDEAVYGTAQLPKFAEDLFRTTDGRWLIPTAEVTLTNLVREEILDQEKLPLRFTALTPSFRSEAGSAGRDTRGMLRQHQFWKCELVSITDAESAVAEHERMTACAEEVLKRLGLHFRTMTLCTGDMGFGSRKTYDLEVWLPGQNAFREISSCSVCGDFQGRRMNARYRGKDDKSNKFVHTLNGSGTAVGRCLIAVLENYLNEDGSVTIPDVLLPYMGGLTKIERAA.

231 to 233 (TAE) is a binding site for L-serine. Residue 262–264 (RSE) coordinates ATP. E285 lines the L-serine pocket. An ATP-binding site is contributed by 349-352 (EISS). L-serine is bound at residue S385.

It belongs to the class-II aminoacyl-tRNA synthetase family. Type-1 seryl-tRNA synthetase subfamily. As to quaternary structure, homodimer. The tRNA molecule binds across the dimer.

It is found in the cytoplasm. The catalysed reaction is tRNA(Ser) + L-serine + ATP = L-seryl-tRNA(Ser) + AMP + diphosphate + H(+). It catalyses the reaction tRNA(Sec) + L-serine + ATP = L-seryl-tRNA(Sec) + AMP + diphosphate + H(+). The protein operates within aminoacyl-tRNA biosynthesis; selenocysteinyl-tRNA(Sec) biosynthesis; L-seryl-tRNA(Sec) from L-serine and tRNA(Sec): step 1/1. Its function is as follows. Catalyzes the attachment of serine to tRNA(Ser). Is also able to aminoacylate tRNA(Sec) with serine, to form the misacylated tRNA L-seryl-tRNA(Sec), which will be further converted into selenocysteinyl-tRNA(Sec). In Rhizobium johnstonii (strain DSM 114642 / LMG 32736 / 3841) (Rhizobium leguminosarum bv. viciae), this protein is Serine--tRNA ligase.